The chain runs to 246 residues: tRNA pseudouridine synthase A (246 aa).

Residue Asp-52 is the Nucleophile of the active site. Tyr-110 contributes to the substrate binding site.

The protein belongs to the tRNA pseudouridine synthase TruA family. Homodimer.

It catalyses the reaction uridine(38/39/40) in tRNA = pseudouridine(38/39/40) in tRNA. Formation of pseudouridine at positions 38, 39 and 40 in the anticodon stem and loop of transfer RNAs. In Exiguobacterium sp. (strain ATCC BAA-1283 / AT1b), this protein is tRNA pseudouridine synthase A.